Consider the following 496-residue polypeptide: Glycerol kinase (496 aa).

Thr-12 contacts ADP. Residues Thr-12, Thr-13, and Ser-14 each coordinate ATP. Thr-12 serves as a coordination point for sn-glycerol 3-phosphate. Position 16 (Arg-16) interacts with ADP. Sn-glycerol 3-phosphate contacts are provided by Arg-82, Glu-83, and Tyr-134. Positions 82, 83, and 134 each coordinate glycerol. Position 230 is a phosphohistidine; by HPr (His-230). Asp-244 contributes to the sn-glycerol 3-phosphate binding site. Glycerol-binding residues include Asp-244 and Gln-245. ADP contacts are provided by Thr-266 and Gly-309. Thr-266, Gly-309, Gln-313, and Gly-410 together coordinate ATP. Residues Gly-410 and Asn-414 each contribute to the ADP site.

It belongs to the FGGY kinase family. Homotetramer and homodimer (in equilibrium). Post-translationally, the phosphoenolpyruvate-dependent sugar phosphotransferase system (PTS), including enzyme I, and histidine-containing protein (HPr) are required for the phosphorylation, which leads to the activation of the enzyme.

The catalysed reaction is glycerol + ATP = sn-glycerol 3-phosphate + ADP + H(+). It participates in polyol metabolism; glycerol degradation via glycerol kinase pathway; sn-glycerol 3-phosphate from glycerol: step 1/1. Activated by phosphorylation and inhibited by fructose 1,6-bisphosphate (FBP). Functionally, key enzyme in the regulation of glycerol uptake and metabolism. Catalyzes the phosphorylation of glycerol to yield sn-glycerol 3-phosphate. The sequence is that of Glycerol kinase from Bacillus licheniformis (strain ATCC 14580 / DSM 13 / JCM 2505 / CCUG 7422 / NBRC 12200 / NCIMB 9375 / NCTC 10341 / NRRL NRS-1264 / Gibson 46).